We begin with the raw amino-acid sequence, 126 residues long: Fluoride-specific ion channel FluC (126 aa).

The next 4 membrane-spanning stretches (helical) occupy residues 6–26 (FVAV…FAVL), 36–56 (YGTL…VGFF), 69–89 (LAIT…SEVV), and 99–119 (WAGL…AFGL). G76 and T79 together coordinate Na(+).

It belongs to the fluoride channel Fluc/FEX (TC 1.A.43) family.

It is found in the cell inner membrane. The catalysed reaction is fluoride(in) = fluoride(out). With respect to regulation, na(+) is not transported, but it plays an essential structural role and its presence is essential for fluoride channel function. Functionally, fluoride-specific ion channel. Important for reducing fluoride concentration in the cell, thus reducing its toxicity. This is Fluoride-specific ion channel FluC from Cupriavidus necator (strain ATCC 17699 / DSM 428 / KCTC 22496 / NCIMB 10442 / H16 / Stanier 337) (Ralstonia eutropha).